The primary structure comprises 197 residues: Dephospho-CoA kinase (197 aa).

Residues 4–197 (LIGLTGGIAT…VLKWLKTITK (194 aa)) enclose the DPCK domain. 12–17 (ATGKST) lines the ATP pocket.

This sequence belongs to the CoaE family.

The protein localises to the cytoplasm. It carries out the reaction 3'-dephospho-CoA + ATP = ADP + CoA + H(+). It functions in the pathway cofactor biosynthesis; coenzyme A biosynthesis; CoA from (R)-pantothenate: step 5/5. Catalyzes the phosphorylation of the 3'-hydroxyl group of dephosphocoenzyme A to form coenzyme A. This chain is Dephospho-CoA kinase, found in Lactiplantibacillus plantarum (strain ATCC BAA-793 / NCIMB 8826 / WCFS1) (Lactobacillus plantarum).